The primary structure comprises 802 residues: Leucine--tRNA ligase (802 aa).

Residues 40-51 (PYPSGAGLHVGH) carry the 'HIGH' region motif. The short motif at 576-580 (KMSKS) is the 'KMSKS' region element. Lysine 579 is an ATP binding site.

The protein belongs to the class-I aminoacyl-tRNA synthetase family.

It localises to the cytoplasm. It carries out the reaction tRNA(Leu) + L-leucine + ATP = L-leucyl-tRNA(Leu) + AMP + diphosphate. This is Leucine--tRNA ligase from Bacillus cereus (strain G9842).